We begin with the raw amino-acid sequence, 597 residues long: Sialic acid-binding Ig-like lectin 12 (597 aa).

The first 20 residues, 1–20 (MLLLLLLLLLPPLLCGRVGA), serve as a signal peptide directing secretion. 2 consecutive Ig-like V-type domains span residues 21-144 (KEQK…VNVT) and 145-271 (ASQD…VHVT). Topologically, residues 21-483 (KEQKDYLLTM…RPISGVTLGA (463 aa)) are extracellular. The cysteines at positions 46 and 106 are disulfide-linked. 4 N-linked (GlcNAc...) asparagine glycosylation sites follow: asparagine 142, asparagine 181, asparagine 232, and asparagine 292. 3 cysteine pairs are disulfide-bonded: cysteine 168-cysteine 301, cysteine 173-cysteine 233, and cysteine 295-cysteine 344. The Ig-like C2-type 1 domain maps to 277–360 (PTFSIPGTLE…AGVTTTRAVR (84 aa)). 3 N-linked (GlcNAc...) asparagine glycosylation sites follow: asparagine 362, asparagine 369, and asparagine 387. The region spanning 367–464 (PQNLTMTVFQ…GSQHISLSLS (98 aa)) is the Ig-like C2-type 2 domain. The cysteines at positions 403 and 448 are disulfide-linked. Residues 484-504 (VGGAGATALVFLSFCIIFVVV) form a helical membrane-spanning segment. At 505-597 (RSCRKKSARP…YEYSEINILK (93 aa)) the chain is on the cytoplasmic side. The tract at residues 514–558 (PAVGVGDTGMEDTNAVRGSASQGPLIESPADDSPPHHAPPALATP) is disordered. The ITIM motif signature appears at 565 to 570 (IQYASL). Tyrosine 567 and tyrosine 590 each carry phosphotyrosine. The SLAM-like motif motif lies at 588–593 (YEYSEI).

This sequence belongs to the immunoglobulin superfamily. SIGLEC (sialic acid binding Ig-like lectin) family.

Its subcellular location is the membrane. Putative adhesion molecule that mediates sialic-acid dependent binding to cells. The sialic acid recognition site may be masked by cis interactions with sialic acids on the same cell surface. This Pan troglodytes (Chimpanzee) protein is Sialic acid-binding Ig-like lectin 12 (SIGLEC12).